The chain runs to 642 residues: Threonine--tRNA ligase (642 aa).

The 61-residue stretch at Met-1 to Thr-61 folds into the TGS domain. The segment at Asp-243–Pro-534 is catalytic. Residue Lys-286 is modified to N6-acetyllysine. Zn(2+) contacts are provided by Cys-334, His-385, and His-511.

This sequence belongs to the class-II aminoacyl-tRNA synthetase family. As to quaternary structure, homodimer. Zn(2+) is required as a cofactor.

It localises to the cytoplasm. It carries out the reaction tRNA(Thr) + L-threonine + ATP = L-threonyl-tRNA(Thr) + AMP + diphosphate + H(+). Its function is as follows. Catalyzes the attachment of threonine to tRNA(Thr) in a two-step reaction: L-threonine is first activated by ATP to form Thr-AMP and then transferred to the acceptor end of tRNA(Thr). Also edits incorrectly charged L-seryl-tRNA(Thr). The sequence is that of Threonine--tRNA ligase from Shigella dysenteriae serotype 1 (strain Sd197).